The following is a 449-amino-acid chain: UDP-N-acetylmuramate--L-alanine ligase (449 aa).

ATP is bound at residue 121–127 (GAHGKSS).

Belongs to the MurCDEF family.

The protein localises to the cytoplasm. The enzyme catalyses UDP-N-acetyl-alpha-D-muramate + L-alanine + ATP = UDP-N-acetyl-alpha-D-muramoyl-L-alanine + ADP + phosphate + H(+). It participates in cell wall biogenesis; peptidoglycan biosynthesis. In terms of biological role, cell wall formation. This Helicobacter pylori (strain HPAG1) protein is UDP-N-acetylmuramate--L-alanine ligase.